The following is a 327-amino-acid chain: GTPase Obg (327 aa).

In terms of domain architecture, Obg spans 1-159 (MQFIDQANII…WEVQLELKLL (159 aa)). Positions 160-327 (AEVGIIGLPN…SLLFEVWKRI (168 aa)) constitute an OBG-type G domain. ATP is bound by residues 166-173 (GLPNAGKS), 191-195 (FTTLI), 213-216 (DIPG), 280-283 (NKME), and 309-311 (SSS). Positions 173 and 193 each coordinate Mg(2+).

This sequence belongs to the TRAFAC class OBG-HflX-like GTPase superfamily. OBG GTPase family. Monomer. Mg(2+) is required as a cofactor.

It localises to the cytoplasm. In terms of biological role, an essential GTPase which binds GTP, GDP and possibly (p)ppGpp with moderate affinity, with high nucleotide exchange rates and a fairly low GTP hydrolysis rate. Plays a role in control of the cell cycle, stress response, ribosome biogenesis and in those bacteria that undergo differentiation, in morphogenesis control. This Prochlorococcus marinus (strain MIT 9312) protein is GTPase Obg.